Reading from the N-terminus, the 360-residue chain is Phospho-N-acetylmuramoyl-pentapeptide-transferase (360 aa).

A run of 10 helical transmembrane segments spans residues 25 to 45 (RAIL…PWVI), 73 to 93 (TMGG…WADL), 97 to 117 (YVLA…VDDY), 132 to 152 (WKYF…FVTA), 168 to 188 (VAWQ…VGFS), 199 to 219 (GLAI…AYLV), 236 to 256 (SGEL…FLWF), 263 to 283 (VFMG…IAVI), 288 to 308 (IVFF…ILQV), and 339 to 359 (IVRF…TLKI).

The protein belongs to the glycosyltransferase 4 family. MraY subfamily. Mg(2+) serves as cofactor.

It is found in the cell inner membrane. The enzyme catalyses UDP-N-acetyl-alpha-D-muramoyl-L-alanyl-gamma-D-glutamyl-meso-2,6-diaminopimeloyl-D-alanyl-D-alanine + di-trans,octa-cis-undecaprenyl phosphate = di-trans,octa-cis-undecaprenyl diphospho-N-acetyl-alpha-D-muramoyl-L-alanyl-D-glutamyl-meso-2,6-diaminopimeloyl-D-alanyl-D-alanine + UMP. The protein operates within cell wall biogenesis; peptidoglycan biosynthesis. Catalyzes the initial step of the lipid cycle reactions in the biosynthesis of the cell wall peptidoglycan: transfers peptidoglycan precursor phospho-MurNAc-pentapeptide from UDP-MurNAc-pentapeptide onto the lipid carrier undecaprenyl phosphate, yielding undecaprenyl-pyrophosphoryl-MurNAc-pentapeptide, known as lipid I. This Teredinibacter turnerae (strain ATCC 39867 / T7901) protein is Phospho-N-acetylmuramoyl-pentapeptide-transferase.